Here is a 408-residue protein sequence, read N- to C-terminus: MSPCENDTPINWKRNLIVAWLGCFLTGAAFSLVMPFLPLYVEQLGVTGHSALNMWSGIVFSITFLFSAIASPFWGGLADRKGRKLMLLRSALGMGIVMVLMGLAQNIWQFLILRALLGLLGGFVPNANALIATQVPRNKSGWALGTLSTGGVSGALLGPMAGGLLADSYGLRPVFFITASVLILCFFVTLFCIREKFQPVSKKEMLHMREVVTSLKNPKLVLSLFVTTLIIQVATGSIAPILTLYVRELAGNVSNVAFISGMIASVPGVAALLSAPRLGKLGDRIGPEKILITALIFSVLLLIPMSYVQTPLQLGILRFLLGAADGALLPAVQTLLVYNSSNQIAGRIFSYNQSFRDIGNVTGPLMGAAISANYGFRAVFLVTAGVVLFNAVYSWNSLRRRRIPQISN.

Transmembrane regions (helical) follow at residues 16-36 (LIVA…VMPF), 58-78 (IVFS…GGLA), 92-112 (LGMG…QFLI), 115-135 (ALLG…ATQV), 146-166 (TLST…GLLA), 173-193 (PVFF…LFCI), 224-244 (LFVT…ILTL), 256-276 (VAFI…LSAP), 290-310 (ILIT…YVQT), 319-339 (FLLG…LVYN), and 378-398 (AVFL…WNSL).

The protein belongs to the major facilitator superfamily. DHA1 family. MdtG (TC 2.A.1.2.20) subfamily.

The protein resides in the cell inner membrane. Functionally, confers resistance to fosfomycin and deoxycholate. The protein is Multidrug resistance protein MdtG of Escherichia coli O127:H6 (strain E2348/69 / EPEC).